Reading from the N-terminus, the 646-residue chain is FAD-binding monooxygenase prhK (646 aa).

N-linked (GlcNAc...) asparagine glycosylation is present at Asn-46. The chain crosses the membrane as a helical span at residues Ile-80–Ile-97. Residues Thr-119–Trp-122, Asp-131–Thr-132, and Tyr-137 each bind FAD. Met-129–Asp-131 contributes to the NADP(+) binding site. Residues Thr-275 to Gln-281 and Arg-298 to Thr-299 each bind NADP(+). 3 N-linked (GlcNAc...) asparagine glycosylation sites follow: Asn-429, Asn-483, and Asn-529.

The protein belongs to the FAD-binding monooxygenase family. The cofactor is FAD.

Its subcellular location is the membrane. The catalysed reaction is preaustinoid A + AH2 + O2 = preaustinoid A1 + A + H2O. Its pathway is secondary metabolite biosynthesis; terpenoid biosynthesis. Its function is as follows. FAD-binding monooxygenase; part of the gene cluster that mediates the biosynthesis of paraherquonin, a meroterpenoid with a unique, highly congested hexacyclic molecular architecture. The first step of the pathway is the synthesis of 3,5-dimethylorsellinic acid (DMOA) by the polyketide synthase prhL. Synthesis of DMOA is followed by farnesylation by the prenyltransferase prhE, methylesterification by the methyl-transferase prhM, epoxidation of the prenyl chain by the flavin-dependent monooxygenase prhF, and cyclization of the farnesyl moiety by the terpene cyclase prhH, to yield the tetracyclic intermediate, protoaustinoid A. The short chain dehydrogenase prhI then oxidizes the C-3 alcohol group of the terpene cyclase product to transform protoaustinoid A into protoaustinoid B. The FAD-binding monooxygenase prhJ catalyzes the oxidation of protoaustinoid B into preaustinoid A which is further oxidized into preaustinoid A1 by FAD-binding monooxygenase phrK. Finally, prhA leads to berkeleydione via the berkeleyone B intermediate. PrhA is a multifunctional dioxygenase that first desaturates at C5-C6 to form berkeleyone B, followed by rearrangement of the A/B-ring to form the cycloheptadiene moiety in berkeleydione. Berkeleydione serves as the key intermediate for the biosynthesis of paraherquonin as well as many other meroterpenoids. The cytochrome P450 monooxygenases prhB, prhD, and prhN, as well as the isomerase prhC, are probably involved in the late stage of paraherquonin biosynthesis, after the production of berkeleydione. Especially prhC might be a multifunctional enzyme that catalyzes the D-ring expansion via intramolecular methoxy rearrangement, as well as the hydrolysis of the expanded D-ring. The polypeptide is FAD-binding monooxygenase prhK (Penicillium brasilianum).